The primary structure comprises 114 residues: T cell receptor beta variable 5-5 (114 aa).

The N-terminal stretch at 1–21 is a signal peptide; the sequence is MGPGLLCWVLLCLLGAGPVDA. In terms of domain architecture, Ig-like spans 22–114; it reads GVTQSPTHLI…SALYLCASSL (93 aa). C42 and C110 form a disulfide bridge. N-linked (GlcNAc...) asparagine glycosylation occurs at N90.

In terms of assembly, alpha-beta TR is a heterodimer composed of an alpha and beta chain; disulfide-linked. The alpha-beta TR is associated with the transmembrane signaling CD3 coreceptor proteins to form the TR-CD3 (TcR or TCR). The assembly of alpha-beta TR heterodimers with CD3 occurs in the endoplasmic reticulum where a single alpha-beta TR heterodimer associates with one CD3D-CD3E heterodimer, one CD3G-CD3E heterodimer and one CD247 homodimer forming a stable octameric structure. CD3D-CD3E and CD3G-CD3E heterodimers preferentially associate with TR alpha and TR beta chains, respectively. The association of the CD247 homodimer is the last step of TcR assembly in the endoplasmic reticulum and is required for transport to the cell surface.

It is found in the cell membrane. In terms of biological role, v region of the variable domain of T cell receptor (TR) beta chain that participates in the antigen recognition. Alpha-beta T cell receptors are antigen specific receptors which are essential to the immune response and are present on the cell surface of T lymphocytes. Recognize peptide-major histocompatibility (MH) (pMH) complexes that are displayed by antigen presenting cells (APC), a prerequisite for efficient T cell adaptive immunity against pathogens. Binding of alpha-beta TR to pMH complex initiates TR-CD3 clustering on the cell surface and intracellular activation of LCK that phosphorylates the ITAM motifs of CD3G, CD3D, CD3E and CD247 enabling the recruitment of ZAP70. In turn ZAP70 phosphorylates LAT, which recruits numerous signaling molecules to form the LAT signalosome. The LAT signalosome propagates signal branching to three major signaling pathways, the calcium, the mitogen-activated protein kinase (MAPK) kinase and the nuclear factor NF-kappa-B (NF-kB) pathways, leading to the mobilization of transcription factors that are critical for gene expression and essential for T cell growth and differentiation. The T cell repertoire is generated in the thymus, by V-(D)-J rearrangement. This repertoire is then shaped by intrathymic selection events to generate a peripheral T cell pool of self-MH restricted, non-autoaggressive T cells. Post-thymic interaction of alpha-beta TR with the pMH complexes shapes TR structural and functional avidity. In Homo sapiens (Human), this protein is T cell receptor beta variable 5-5.